The sequence spans 147 residues: Protegrin-2 (147 aa).

A signal peptide spans 1–29 (METQRASLCLGRWSLWLLLLALVVPSASA). A propeptide spanning residues 30–130 (QALSYREAVL…DITCNEVQGV (101 aa)) is cleaved from the precursor. Residues 61 to 80 (DQPPKADEDPGTPKPVSFTV) are disordered. Disulfide bonds link Cys-85-Cys-96, Cys-107-Cys-124, Cys-136-Cys-145, and Cys-138-Cys-143. Position 146 is a valine amide (Val-146).

The protein belongs to the cathelicidin family.

It is found in the secreted. In terms of biological role, microbicidal activity. Active against E.coli, Listeria monocytogenes and C.albicans, in vitro. The chain is Protegrin-2 (NPG2) from Sus scrofa (Pig).